Consider the following 309-residue polypeptide: tRNA hydroxylation protein P2 (309 aa).

The protein belongs to the peptidase U32 family.

Its function is as follows. Involved in prephenate-dependent formation of 5-hydroxyuridine (ho5U) modification at position 34 in tRNAs, the first step in 5-methoxyuridine (mo5U) biosynthesis. In Bacillus subtilis (strain 168), this protein is tRNA hydroxylation protein P2.